A 137-amino-acid polypeptide reads, in one-letter code: Small heat shock protein IbpA (137 aa).

The sHSP domain occupies serine 28–asparagine 137.

Belongs to the small heat shock protein (HSP20) family. As to quaternary structure, monomer. Forms homomultimers of about 100-150 subunits at optimal growth temperatures. Conformation changes to monomers at high temperatures or high ionic concentrations.

It localises to the cytoplasm. In terms of biological role, associates with aggregated proteins, together with IbpB, to stabilize and protect them from irreversible denaturation and extensive proteolysis during heat shock and oxidative stress. Aggregated proteins bound to the IbpAB complex are more efficiently refolded and reactivated by the ATP-dependent chaperone systems ClpB and DnaK/DnaJ/GrpE. Its activity is ATP-independent. This chain is Small heat shock protein IbpA, found in Klebsiella pneumoniae (strain 342).